A 341-amino-acid chain; its full sequence is Methionine import ATP-binding protein MetN 2 (341 aa).

An ABC transporter domain is found at 2-241 (ILLENVKKIY…PQQDITKRFV (240 aa)). Residue 38–45 (GYSGAGKS) coordinates ATP.

Belongs to the ABC transporter superfamily. Methionine importer (TC 3.A.1.24) family. In terms of assembly, the complex is composed of two ATP-binding proteins (MetN), two transmembrane proteins (MetI) and a solute-binding protein (MetQ).

Its subcellular location is the cell membrane. The catalysed reaction is L-methionine(out) + ATP + H2O = L-methionine(in) + ADP + phosphate + H(+). It carries out the reaction D-methionine(out) + ATP + H2O = D-methionine(in) + ADP + phosphate + H(+). In terms of biological role, part of the ABC transporter complex MetNIQ involved in methionine import. Responsible for energy coupling to the transport system. The sequence is that of Methionine import ATP-binding protein MetN 2 from Bacillus thuringiensis subsp. konkukian (strain 97-27).